The sequence spans 615 residues: ATP-dependent zinc metalloprotease FtsH 2 (615 aa).

Topologically, residues 1–7 (MNEPNRN) are cytoplasmic. The chain crosses the membrane as a helical span at residues 8–28 (FFWIFFLILGIFWLQSVWFGS). Topologically, residues 29 to 99 (RTVQQIPYSQ…VTYRREIENT (71 aa)) are periplasmic. The chain crosses the membrane as a helical span at residues 100–120 (FFRDLLSWVVPALIFVAVFLY). Residues 121-615 (FSRKFAEKGG…APQRERDLSV (495 aa)) are Cytoplasmic-facing. 195-202 (GPPGTGKT) contacts ATP. His-418 is a Zn(2+) binding site. The active site involves Glu-419. 2 residues coordinate Zn(2+): His-422 and Asp-495.

The protein in the central section; belongs to the AAA ATPase family. In the C-terminal section; belongs to the peptidase M41 family. In terms of assembly, homohexamer. Zn(2+) is required as a cofactor.

The protein resides in the cell inner membrane. Its function is as follows. Acts as a processive, ATP-dependent zinc metallopeptidase for both cytoplasmic and membrane proteins. Plays a role in the quality control of integral membrane proteins. The polypeptide is ATP-dependent zinc metalloprotease FtsH 2 (Bdellovibrio bacteriovorus (strain ATCC 15356 / DSM 50701 / NCIMB 9529 / HD100)).